The following is a 103-amino-acid chain: Heme-copper oxidase subunit 4 (103 aa).

Transmembrane regions (helical) follow at residues 20-40 (VWIV…EGIA), 42-62 (NPFV…ALFF), and 75-95 (ITVS…TSVL).

The protein localises to the cell membrane. This chain is Heme-copper oxidase subunit 4 (aoxC), found in Aeropyrum pernix (strain ATCC 700893 / DSM 11879 / JCM 9820 / NBRC 100138 / K1).